A 126-amino-acid chain; its full sequence is uncharacterized protein (126 aa).

The VOC domain maps to 4–126 (RIDHTGIMVR…DGEWIEFFQR (123 aa)). A divalent metal cation is bound by residues histidine 7, glutamate 42, histidine 74, and glutamate 122.

The protein belongs to the glyoxalase I family.

This is an uncharacterized protein from Bacillus subtilis (strain 168).